The primary structure comprises 378 residues: Putative zinc finger protein C09F5.3 (378 aa).

A compositionally biased stretch (basic residues) spans 1–14 (MRKTEKMKRPHNSS). 2 disordered regions span residues 1–36 (MRKTEKMKRPHNSSHVKQEERADDSHSNSPASSKSI) and 61–80 (TLSEHVPEKKPSISTSNSAP). Composition is skewed to basic and acidic residues over residues 16-26 (VKQEERADDSH) and 62-71 (LSEHVPEKKP). The C2H2-type 1 zinc-finger motif lies at 42–65 (LKCELCSTVCSSISQLQSHTLSEH). A C2H2-type 2; degenerate zinc finger spans residues 85 to 107 (VACQQCEDTFEDFAQFAIHMKSH). The C2H2-type 3; degenerate zinc-finger motif lies at 204-226 (YGCALCATSYPSQLHLITHVQMS). The interval 231–250 (TFYPPSLPIPTPPSPKSTPK) is disordered. Over residues 235–246 (PSLPIPTPPSPK) the composition is skewed to pro residues. 4 consecutive C2H2-type zinc fingers follow at residues 254–277 (LQCSVCDESVLGEDGLDEHRLRKH), 284–306 (DKCADCQEPLLNETSFVEHCLRH), 312–334 (HHCPVCRQSLRSDSQIHAHCAYH), and 355–377 (FVCPICGEKLDDGFALIEHTKIH).

Its subcellular location is the nucleus. The chain is Putative zinc finger protein C09F5.3 from Caenorhabditis elegans.